Reading from the N-terminus, the 332-residue chain is Phospho-N-acetylmuramoyl-pentapeptide-transferase (332 aa).

8 consecutive transmembrane segments (helical) span residues 9–29, 55–75, 79–99, 115–135, 155–175, 196–216, 253–273, and 312–332; these read IYTIIIGFFITLILGPLIIPF, TIGGLIIIASVLVTSFTAGLI, LWVAIGAMVAFGLIGFIDDFI, MSLQIIVAVFLAIYQSNISVM, IPQYLDLGILYIPFIVFVVVA, IVAAFFSILAMEWGYPSLAIF, AVAILMNVALIVPIVGGIYFA, and VVIVFWIVTVILCLIGMLGLN.

Belongs to the glycosyltransferase 4 family. MraY subfamily. Mg(2+) serves as cofactor.

The protein localises to the cell membrane. The enzyme catalyses UDP-N-acetyl-alpha-D-muramoyl-L-alanyl-gamma-D-glutamyl-meso-2,6-diaminopimeloyl-D-alanyl-D-alanine + di-trans,octa-cis-undecaprenyl phosphate = di-trans,octa-cis-undecaprenyl diphospho-N-acetyl-alpha-D-muramoyl-L-alanyl-D-glutamyl-meso-2,6-diaminopimeloyl-D-alanyl-D-alanine + UMP. The protein operates within cell wall biogenesis; peptidoglycan biosynthesis. Its function is as follows. Catalyzes the initial step of the lipid cycle reactions in the biosynthesis of the cell wall peptidoglycan: transfers peptidoglycan precursor phospho-MurNAc-pentapeptide from UDP-MurNAc-pentapeptide onto the lipid carrier undecaprenyl phosphate, yielding undecaprenyl-pyrophosphoryl-MurNAc-pentapeptide, known as lipid I. The protein is Phospho-N-acetylmuramoyl-pentapeptide-transferase of Alkaliphilus oremlandii (strain OhILAs) (Clostridium oremlandii (strain OhILAs)).